The primary structure comprises 325 residues: uncharacterized protein (325 aa).

Positions 37–85 (EKPTYTPAKPVKKAPSVVQPRRVSRTLRSSESVHTNHGPERVFESPTPA) are disordered. A Phosphoserine modification is found at S52. Polar residues predominate over residues 62–71 (TLRSSESVHT). The FCP1 homology domain maps to 153-311 (EDEGKKCLIL…IDLIPFLEHL (159 aa)).

This is an uncharacterized protein from Schizosaccharomyces pombe (strain 972 / ATCC 24843) (Fission yeast).